We begin with the raw amino-acid sequence, 487 residues long: UDP-N-acetylmuramate--L-alanine ligase (487 aa).

Position 124–130 (124–130) interacts with ATP; it reads GTHGKTT.

It belongs to the MurCDEF family.

It is found in the cytoplasm. It catalyses the reaction UDP-N-acetyl-alpha-D-muramate + L-alanine + ATP = UDP-N-acetyl-alpha-D-muramoyl-L-alanine + ADP + phosphate + H(+). Its pathway is cell wall biogenesis; peptidoglycan biosynthesis. In terms of biological role, cell wall formation. This is UDP-N-acetylmuramate--L-alanine ligase from Acaryochloris marina (strain MBIC 11017).